The chain runs to 201 residues: Small ribosomal subunit protein uS4 (201 aa).

A disordered region spans residues 26–48 (LSKKNYPPGQHGNSRKRKTSEYG). Positions 92–155 (GRLDNVVFRL…KSLEVIANSL (64 aa)) constitute an S4 RNA-binding domain.

This sequence belongs to the universal ribosomal protein uS4 family. Part of the 30S ribosomal subunit. Contacts protein S5. The interaction surface between S4 and S5 is involved in control of translational fidelity.

One of the primary rRNA binding proteins, it binds directly to 16S rRNA where it nucleates assembly of the body of the 30S subunit. In terms of biological role, with S5 and S12 plays an important role in translational accuracy. The chain is Small ribosomal subunit protein uS4 from Bacteroides thetaiotaomicron (strain ATCC 29148 / DSM 2079 / JCM 5827 / CCUG 10774 / NCTC 10582 / VPI-5482 / E50).